Reading from the N-terminus, the 434-residue chain is Histidinol dehydrogenase (434 aa).

Residues tyrosine 130, glutamine 192, and asparagine 215 each coordinate NAD(+). The substrate site is built by serine 238, glutamine 260, and histidine 263. 2 residues coordinate Zn(2+): glutamine 260 and histidine 263. Catalysis depends on proton acceptor residues glutamate 328 and histidine 329. 4 residues coordinate substrate: histidine 329, aspartate 362, glutamate 416, and histidine 421. Position 362 (aspartate 362) interacts with Zn(2+). Zn(2+) is bound at residue histidine 421.

The protein belongs to the histidinol dehydrogenase family. The cofactor is Zn(2+).

It catalyses the reaction L-histidinol + 2 NAD(+) + H2O = L-histidine + 2 NADH + 3 H(+). The protein operates within amino-acid biosynthesis; L-histidine biosynthesis; L-histidine from 5-phospho-alpha-D-ribose 1-diphosphate: step 9/9. Functionally, catalyzes the sequential NAD-dependent oxidations of L-histidinol to L-histidinaldehyde and then to L-histidine. The polypeptide is Histidinol dehydrogenase (Synechococcus sp. (strain ATCC 27144 / PCC 6301 / SAUG 1402/1) (Anacystis nidulans)).